The following is a 175-amino-acid chain: T-cell surface glycoprotein CD3 epsilon chain (175 aa).

A signal peptide spans 1–21 (MRCEVPLPLLGLLLCVVGAAA). At 22-100 (QGGQEEFAVE…VCANCEELDT (79 aa)) the chain is on the extracellular side. The chain crosses the membrane as a helical span at residues 101-121 (FTVVGIIAADLLITLGVLILV). Topologically, residues 122 to 175 (YYFSKNKKGQSRAAAGSRPRAQKMRRPPPVPNPDYEPIRKGQRDVYAGLEHRGF) are cytoplasmic. Residues 133-163 (RAAAGSRPRAQKMRRPPPVPNPDYEPIRKGQ) form a disordered region. The region spanning 146–173 (RRPPPVPNPDYEPIRKGQRDVYAGLEHR) is the ITAM domain.

The TCR/CD3 complex of T-lymphocytes consists of either a TCR alpha/beta or TCR gamma/delta heterodimer coexpressed at the cell surface with the invariant subunits of CD3 labeled gamma, delta, epsilon, zeta, and eta.

The protein resides in the cell membrane. In terms of biological role, the CD3 complex mediates signal transduction, resulting in T-cell activation and proliferation. Required for normal immune responses. This chain is T-cell surface glycoprotein CD3 epsilon chain (CD3E), found in Gallus gallus (Chicken).